The primary structure comprises 204 residues: Peptidyl-tRNA hydrolase (204 aa).

Tyr-14 contributes to the tRNA binding site. His-19 serves as the catalytic Proton acceptor. Residues Tyr-64, Asn-66, and Asn-112 each coordinate tRNA.

This sequence belongs to the PTH family. As to quaternary structure, monomer.

It is found in the cytoplasm. It catalyses the reaction an N-acyl-L-alpha-aminoacyl-tRNA + H2O = an N-acyl-L-amino acid + a tRNA + H(+). Hydrolyzes ribosome-free peptidyl-tRNAs (with 1 or more amino acids incorporated), which drop off the ribosome during protein synthesis, or as a result of ribosome stalling. Its function is as follows. Catalyzes the release of premature peptidyl moieties from peptidyl-tRNA molecules trapped in stalled 50S ribosomal subunits, and thus maintains levels of free tRNAs and 50S ribosomes. The protein is Peptidyl-tRNA hydrolase of Nitrobacter hamburgensis (strain DSM 10229 / NCIMB 13809 / X14).